Here is a 316-residue protein sequence, read N- to C-terminus: Aspartate carbamoyltransferase catalytic subunit (316 aa).

The carbamoyl phosphate site is built by arginine 58 and threonine 59. Lysine 86 provides a ligand contact to L-aspartate. Residues arginine 108, histidine 136, and glutamine 139 each contribute to the carbamoyl phosphate site. Arginine 169 and arginine 223 together coordinate L-aspartate. Carbamoyl phosphate contacts are provided by glycine 264 and proline 265.

It belongs to the aspartate/ornithine carbamoyltransferase superfamily. ATCase family. In terms of assembly, heterododecamer (2C3:3R2) of six catalytic PyrB chains organized as two trimers (C3), and six regulatory PyrI chains organized as three dimers (R2).

The enzyme catalyses carbamoyl phosphate + L-aspartate = N-carbamoyl-L-aspartate + phosphate + H(+). It participates in pyrimidine metabolism; UMP biosynthesis via de novo pathway; (S)-dihydroorotate from bicarbonate: step 2/3. Catalyzes the condensation of carbamoyl phosphate and aspartate to form carbamoyl aspartate and inorganic phosphate, the committed step in the de novo pyrimidine nucleotide biosynthesis pathway. This chain is Aspartate carbamoyltransferase catalytic subunit, found in Granulibacter bethesdensis (strain ATCC BAA-1260 / CGDNIH1).